The following is a 684-amino-acid chain: Threonine--tRNA ligase (684 aa).

The TGS domain occupies 1–60; it reads MSISITLHRSGTSRTQQVDTTTTGLDLFGSDRAVVAMRVDGNLVDLQRELHDGAEVEPVE. A catalytic region spans residues 256–567; it reads DHRKLGAELD…LTEHYAGAFP (312 aa). The Zn(2+) site is built by C361, H412, and H544.

The protein belongs to the class-II aminoacyl-tRNA synthetase family. Homodimer. Zn(2+) is required as a cofactor.

Its subcellular location is the cytoplasm. It carries out the reaction tRNA(Thr) + L-threonine + ATP = L-threonyl-tRNA(Thr) + AMP + diphosphate + H(+). Functionally, catalyzes the attachment of threonine to tRNA(Thr) in a two-step reaction: L-threonine is first activated by ATP to form Thr-AMP and then transferred to the acceptor end of tRNA(Thr). Also edits incorrectly charged L-seryl-tRNA(Thr). This is Threonine--tRNA ligase from Cutibacterium acnes (strain DSM 16379 / KPA171202) (Propionibacterium acnes).